We begin with the raw amino-acid sequence, 448 residues long: Protein W (448 aa).

Disordered regions lie at residues 26-104 (KTYG…DPDD) and 193-406 (FVPK…KKGA). Composition is skewed to polar residues over residues 28–37 (YGRSSIQQPS) and 77–96 (DLSS…SNTR). The span at 240-252 (SDDEDENQLEYED) shows a compositional bias: acidic residues. S257 bears the Phosphoserine; by host mark. The span at 296–317 (FPEKEETPDVRRKDSLMQDSCK) shows a compositional bias: basic and acidic residues. S350 carries the phosphoserine; by host modification.

In Hendra virus (isolate Horse/Autralia/Hendra/1994), this protein is Protein W (P/V/C).